The sequence spans 574 residues: Septation ring formation regulator EzrA (574 aa).

Topologically, residues 1 to 7 are extracellular; sequence MSNGLII. A helical membrane pass occupies residues 8 to 26; it reads LIIVIAVALILAYVAAVVL. Residues 27 to 574 lie on the Cytoplasmic side of the membrane; sequence RKRNETLLDS…YEKTRENIRF (548 aa). Coiled coils occupy residues 104 to 141, 267 to 424, and 456 to 524; these read LKAKHAIDSIESQINLVEEDIELIREALADLEKQEAKN, NITQ…QKVN, and ASDH…SIQE.

This sequence belongs to the EzrA family.

Its subcellular location is the cell membrane. Functionally, negative regulator of FtsZ ring formation; modulates the frequency and position of FtsZ ring formation. Inhibits FtsZ ring formation at polar sites. Interacts either with FtsZ or with one of its binding partners to promote depolymerization. This Streptococcus gordonii (strain Challis / ATCC 35105 / BCRC 15272 / CH1 / DL1 / V288) protein is Septation ring formation regulator EzrA.